A 192-amino-acid chain; its full sequence is GTP-binding protein RHO2 (192 aa).

14-21 (GDGACGKT) contributes to the GTP binding site. Positions 36–44 (YHPTVFENY) match the Effector region motif. Residues 61–65 (DTAGQ) and 119–122 (LKKD) each bind GTP. Residue Cys188 is the site of S-palmitoyl cysteine attachment. Cys189 carries the cysteine methyl ester modification. Residue Cys189 is the site of S-geranylgeranyl cysteine attachment. The propeptide at 190-192 (IIL) is removed in mature form.

This sequence belongs to the small GTPase superfamily. Rho family. As to quaternary structure, interacts with BEM4.

The protein localises to the cell membrane. It catalyses the reaction GTP + H2O = GDP + phosphate + H(+). This Saccharomyces cerevisiae (strain ATCC 204508 / S288c) (Baker's yeast) protein is GTP-binding protein RHO2 (RHO2).